The following is a 277-amino-acid chain: tRNA uridine(34) hydroxylase (277 aa).

The Rhodanese domain maps to 126-221 (SSPDVHVIDT…YLETMRGDDS (96 aa)). C181 (cysteine persulfide intermediate) is an active-site residue.

The protein belongs to the TrhO family.

The catalysed reaction is uridine(34) in tRNA + AH2 + O2 = 5-hydroxyuridine(34) in tRNA + A + H2O. In terms of biological role, catalyzes oxygen-dependent 5-hydroxyuridine (ho5U) modification at position 34 in tRNAs. The sequence is that of tRNA uridine(34) hydroxylase from Anaplasma marginale (strain St. Maries).